Here is a 701-residue protein sequence, read N- to C-terminus: Type 3 secretion system secretin (701 aa).

A signal peptide spans Met1–Ala21. Residues Arg229–Ser238 are compositionally biased toward gly residues. The tract at residues Arg229–Asp252 is disordered. The segment covering Asp240–Asp252 has biased composition (polar residues).

This sequence belongs to the bacterial secretin family. T3SS SctC subfamily. The core secretion machinery of the T3SS is composed of approximately 20 different proteins, including cytoplasmic components, a base, an export apparatus and a needle. This subunit is part of the base, which anchors the injectisome in the bacterial cell envelope. Forms a stable homooligomeric complex.

It localises to the cell outer membrane. Its function is as follows. Component of the type III secretion system (T3SS), also called injectisome, which is used to inject bacterial effector proteins into eukaryotic host cells. Forms a ring-shaped multimeric structure with an apparent central pore in the outer membrane. Involved in the secretion of a proteinaceous elicitor of the hypersensitivity response in plants. The protein is Type 3 secretion system secretin of Pseudomonas syringae pv. syringae.